The primary structure comprises 402 residues: Argininosuccinate synthase (402 aa).

ATP contacts are provided by residues 11–19 and A39; that span reads AYSGGLDTS. 2 residues coordinate L-citrulline: Y90 and S95. G120 contacts ATP. Positions 122, 126, and 127 each coordinate L-aspartate. N126 lines the L-citrulline pocket. Residues R130, S179, S188, E264, and Y276 each coordinate L-citrulline.

The protein belongs to the argininosuccinate synthase family. Type 1 subfamily. In terms of assembly, homotetramer.

Its subcellular location is the cytoplasm. It catalyses the reaction L-citrulline + L-aspartate + ATP = 2-(N(omega)-L-arginino)succinate + AMP + diphosphate + H(+). Its pathway is amino-acid biosynthesis; L-arginine biosynthesis; L-arginine from L-ornithine and carbamoyl phosphate: step 2/3. The protein is Argininosuccinate synthase of Roseiflexus castenholzii (strain DSM 13941 / HLO8).